The chain runs to 273 residues: Eukaryotic translation initiation factor 3 subunit G-2 (273 aa).

Residues 193 to 271 (SAVRISNLSE…LILCVEWSKP (79 aa)) enclose the RRM domain.

It belongs to the eIF-3 subunit G family. As to quaternary structure, component of the eukaryotic translation initiation factor 3 (eIF-3) complex. The eIF-3 complex interacts with pix.

The protein localises to the cytoplasm. Its function is as follows. RNA-binding component of the eukaryotic translation initiation factor 3 (eIF-3) complex, which is involved in protein synthesis of a specialized repertoire of mRNAs and, together with other initiation factors, stimulates binding of mRNA and methionyl-tRNAi to the 40S ribosome. The eIF-3 complex specifically targets and initiates translation of a subset of mRNAs involved in cell proliferation. This subunit can bind 18S rRNA. This chain is Eukaryotic translation initiation factor 3 subunit G-2, found in Drosophila melanogaster (Fruit fly).